A 140-amino-acid polypeptide reads, in one-letter code: Large ribosomal subunit protein uL11 (140 aa).

It belongs to the universal ribosomal protein uL11 family. In terms of assembly, part of the ribosomal stalk of the 50S ribosomal subunit. Interacts with L10 and the large rRNA to form the base of the stalk. L10 forms an elongated spine to which L12 dimers bind in a sequential fashion forming a multimeric L10(L12)X complex. Post-translationally, one or more lysine residues are methylated.

Forms part of the ribosomal stalk which helps the ribosome interact with GTP-bound translation factors. The protein is Large ribosomal subunit protein uL11 of Staphylococcus aureus (strain bovine RF122 / ET3-1).